Here is a 286-residue protein sequence, read N- to C-terminus: Divergent deoxyribose-phosphate aldolase-like protein (286 aa).

In terms of assembly, homodimer. Interacts with ADF; the interaction enhances ADF activity in disassembly of filamentous actin and inhibition of actin polymerization.

It is found in the cytoplasm. Functionally, involved in regulation of actin dynamics. In Toxoplasma gondii, this protein is Divergent deoxyribose-phosphate aldolase-like protein.